The following is an 84-amino-acid chain: Dolichol phosphate-mannose biosynthesis regulatory protein (84 aa).

A run of 2 helical transmembrane segments spans residues 11 to 31 (FGLV…VILL) and 49 to 69 (YAVL…GLFI).

The protein belongs to the DPM2 family. Component of the dolichol-phosphate mannose (DPM) synthase complex composed of DPM1, DPM2 and DPM3; in the complex interacts directly with DPM3. Component of the glycosylphosphatidylinositol-N-acetylglucosaminyltransferase (GPI-GnT) complex composed at least by PIGA, PIGC, PIGH, PIGP, PIGQ, PIGY and DPM2. Interacts with PIGA, PIGC and PIGQ.

It is found in the endoplasmic reticulum membrane. It participates in protein modification; protein glycosylation. Functionally, regulates the biosynthesis of dolichol phosphate-mannose. Regulatory subunit of the dolichol-phosphate mannose (DPM) synthase complex; essential for the ER localization and stable expression of DPM1. Part of the glycosylphosphatidylinositol-N-acetylglucosaminyltransferase (GPI-GnT) complex that catalyzes the transfer of N-acetylglucosamine from UDP-N-acetylglucosamine to phosphatidylinositol and participates in the first step of GPI biosynthesis. May act by regulating the GPI-GNT complex. This is Dolichol phosphate-mannose biosynthesis regulatory protein from Cricetulus griseus (Chinese hamster).